A 67-amino-acid chain; its full sequence is Large ribosomal subunit protein bL35 (67 aa).

This sequence belongs to the bacterial ribosomal protein bL35 family.

This Allorhizobium ampelinum (strain ATCC BAA-846 / DSM 112012 / S4) (Agrobacterium vitis (strain S4)) protein is Large ribosomal subunit protein bL35.